A 1392-amino-acid polypeptide reads, in one-letter code: Protein dispatched homolog 3 (1392 aa).

Over 1–73 the chain is Cytoplasmic; the sequence is MDTEDDPLLQ…LGWAFTNPCC (73 aa). Residues 16-40 are disordered; it reads EEQEEEEATGETFLGAQKPGPQPGA. The helical transmembrane segment at 74-94 threads the bilayer; the sequence is AGLVLFLGCSIPMALSAFMFL. Residues 95–462 lie on the Lumenal side of the membrane; it reads YYPPLDIDIS…YEVRRTFNND (368 aa). Positions 162 to 248 are disordered; that stretch reads GNRSRQASRA…HAAVAANQSR (87 aa). The N-linked (GlcNAc...) asparagine glycan is linked to N163. Residues 190–199 show a composition bias toward polar residues; sequence SAAQKPTANR. In terms of domain architecture, SSD spans 457 to 615; the sequence is RTFNNDMLLA…LVTMPAALGL (159 aa). Residues 463-483 form a helical membrane-spanning segment; that stretch reads MLLAFISSSCIAALVYILTSC. Residue S484 is a topological domain, cytoplasmic. A helical transmembrane segment spans residues 485–505; sequence VFLSFFGIASIGLSCLVALFL. Topologically, residues 506–508 are lumenal; that stretch reads YHV. A helical membrane pass occupies residues 509 to 529; it reads VFGIQYLGILNGVAAFVIVGI. The Cytoplasmic segment spans residues 530 to 573; that stretch reads GVDDVFVFINTYRQATHLEDPQLRMIHTVQTAGKATFFTSLTTA. A helical membrane pass occupies residues 574–594; that stretch reads AAYAANVFSQIPAVHDFGLFM. Position 595 (S595) is a topological domain, lumenal. Residues 596 to 616 form a helical membrane-spanning segment; sequence LIVSCCWLAVLVTMPAALGLW. Residues 617–729 are Cytoplasmic-facing; it reads SLYLAPLESS…WVLWSAVKSR (113 aa). A helical membrane pass occupies residues 730–750; sequence WVIVGLFVSILILSLVFASRL. Over 751 to 1182 the chain is Lumenal; it reads RPASRAPLLF…IFMEIVGVQS (432 aa). N1021 is a glycosylation site (N-linked (GlcNAc...) asparagine). Residues 1183–1203 form a helical membrane-spanning segment; the sequence is ALCGLVLSLLICVAAVAVFTT. Residue H1204 is a topological domain, cytoplasmic. The helical transmembrane segment at 1205–1225 threads the bilayer; the sequence is ILLLLPVLLSILGIVCLVVTI. The Lumenal segment spans residues 1226 to 1291; that stretch reads MYWSGWEMGA…TLEAVRHVGV (66 aa). Residues 1292 to 1312 traverse the membrane as a helical segment; sequence AIVSSALTTVIATVPLFFCII. The Cytoplasmic portion of the chain corresponds to 1313–1320; that stretch reads APFAKFGK. A helical transmembrane segment spans residues 1321-1341; the sequence is IVALNTGVSILYTLTVSTALL. Residues 1342 to 1358 lie on the Lumenal side of the membrane; that stretch reads GIMAPSSFTRTRTSFLK. A helical membrane pass occupies residues 1359–1379; sequence ALGAVLLAGALGLGACLVLLQ. Topologically, residues 1380-1392 are cytoplasmic; sequence SGYKIPLPAGASL.

Belongs to the patched family. In terms of tissue distribution, expressed in brain and testis.

It localises to the endoplasmic reticulum membrane. The protein resides in the nucleus membrane. Its subcellular location is the cytoplasmic vesicle membrane. Plays a role in neuronal proliferation and differentiation. Plays a role in the accumulation of cellular cholesterol. Involved in intracellular lipid droplet formation. May contribute to cholesterol homeostasis in neuronal cells. This Homo sapiens (Human) protein is Protein dispatched homolog 3.